A 336-amino-acid polypeptide reads, in one-letter code: Protein SphX (336 aa).

A signal peptide spans 1–27; that stretch reads MFDLSRLSRGIVPMALLLLGISACTPS.

It belongs to the PstS family.

Functionally, may be involved in the system for phosphate transport across the cytoplasmic membrane. The sequence is that of Protein SphX (sphX) from Synechocystis sp. (strain ATCC 27184 / PCC 6803 / Kazusa).